A 1925-amino-acid polypeptide reads, in one-letter code: Cilia- and flagella-associated protein 65 (1925 aa).

A helical membrane pass occupies residues 188-208 (FFTVIPQPIFLSPGITLTLPI). The region spanning 877 to 986 (QLKLDTHKSL…THYMLRLVGV (110 aa)) is the MSP domain. A coiled-coil region spans residues 1525–1550 (SQQLMRQYHKELQEWKDEKVRQEVEF). Disordered regions lie at residues 1645–1667 (KRKAPREESETSEEKSPNKWGPV) and 1736–1823 (SSWE…PESQ). Basic and acidic residues-rich tracts occupy residues 1649 to 1661 (PREESETSEEKSP) and 1739 to 1762 (EDGKGKQPKEDRPEHYPGLGKKEE). The segment covering 1763-1804 (GEEEKGEEEEEELEEEEEEEEETEEEELGKEEIEEKEEERDE) has biased composition (acidic residues).

The protein belongs to the CFAP65 family. Interacts with CFAP47.

It is found in the cell projection. The protein localises to the cilium. It localises to the flagellum membrane. The protein resides in the cytoplasmic vesicle. Its subcellular location is the secretory vesicle. It is found in the acrosome membrane. The protein localises to the cytoplasm. In terms of biological role, plays a role in flagellar formation and sperm motility. This chain is Cilia- and flagella-associated protein 65, found in Homo sapiens (Human).